A 307-amino-acid polypeptide reads, in one-letter code: Mitochondrial glycine transporter (307 aa).

Solcar repeat units lie at residues 8-87 (PRNS…MRSS), 115-199 (LTMY…SKQL), and 221-305 (TSTT…LVKR). The next 6 helical transmembrane spans lie at 14-39 (LIGG…TRIQ), 62-88 (GTLP…RSSL), 121-146 (LLTG…VRYE), 174-197 (GFGA…EKSK), 225-251 (VNTT…KTRM), and 280-298 (GLSM…AWGI).

This sequence belongs to the mitochondrial carrier (TC 2.A.29) family. SLC25A38 subfamily.

It localises to the mitochondrion inner membrane. The catalysed reaction is glycine(in) = glycine(out). Its function is as follows. Mitochondrial glycine transporter that imports glycine into the mitochondrial matrix. Plays an important role in providing glycine for the first enzymatic step in heme biosynthesis, the condensation of glycine with succinyl-CoA to produce 5-aminolevulinate (ALA) in the mitochondrial matrix. The polypeptide is Mitochondrial glycine transporter (Saccharomyces cerevisiae (strain RM11-1a) (Baker's yeast)).